The sequence spans 251 residues: Flap endonuclease Xni (251 aa).

Asp104 provides a ligand contact to Mg(2+). The 90-residue stretch at 160–249 folds into the 5'-3' exonuclease domain; sequence VQPQQLPDYW…IDGNLQQLRL (90 aa). K(+) contacts are provided by Leu171, Ala172, Pro180, Val182, and Ile185. The interaction with DNA stretch occupies residues 184–189; sequence GIGPKS.

This sequence belongs to the Xni family. Mg(2+) is required as a cofactor. K(+) serves as cofactor.

Functionally, has flap endonuclease activity. During DNA replication, flap endonucleases cleave the 5'-overhanging flap structure that is generated by displacement synthesis when DNA polymerase encounters the 5'-end of a downstream Okazaki fragment. This chain is Flap endonuclease Xni, found in Escherichia coli O81 (strain ED1a).